The chain runs to 315 residues: Cysteine synthase (315 aa).

Hydrogen sulfide-binding residues include asparagine 8 and arginine 35. Position 42 is an N6-(pyridoxal phosphate)lysine (lysine 42). Pyridoxal 5'-phosphate is bound by residues asparagine 72 and 177–181 (GTGGT). Position 269 (leucine 269) interacts with hydrogen sulfide. Serine 273 contacts pyridoxal 5'-phosphate.

This sequence belongs to the cysteine synthase/cystathionine beta-synthase family. In terms of assembly, homodimer. Pyridoxal 5'-phosphate serves as cofactor.

It carries out the reaction O-acetyl-L-serine + hydrogen sulfide = L-cysteine + acetate. The protein operates within amino-acid biosynthesis; L-cysteine biosynthesis; L-cysteine from L-serine: step 2/2. The chain is Cysteine synthase (cysK) from Buchnera aphidicola subsp. Acyrthosiphon pisum (strain APS) (Acyrthosiphon pisum symbiotic bacterium).